The primary structure comprises 411 residues: Glutamate dehydrogenase A (411 aa).

Residue K102 is part of the active site.

It belongs to the Glu/Leu/Phe/Val dehydrogenases family.

It carries out the reaction L-glutamate + NAD(+) + H2O = 2-oxoglutarate + NH4(+) + NADH + H(+). The enzyme catalyses L-glutamate + NADP(+) + H2O = 2-oxoglutarate + NH4(+) + NADPH + H(+). The protein is Glutamate dehydrogenase A (GDHA) of Nicotiana plumbaginifolia (Leadwort-leaved tobacco).